The primary structure comprises 489 residues: uncharacterized protein (489 aa).

This is an uncharacterized protein from Bacillus subtilis (strain 168).